The primary structure comprises 829 residues: Periplasmic nitrate reductase (829 aa).

Residues 1 to 36 (MARRDFIKQTAAAAAATVAGVPLTGYTQNIVTESEA) constitute a signal peptide (tat-type signal). A 4Fe-4S Mo/W bis-MGD-type domain is found at 39 to 95 (LKWSKAPCRFCGTGCGVNVAVKDNQVVATHGDFNAEVNKGLNCVKGYFLSKIMYGSD). [4Fe-4S] cluster-binding residues include Cys46, Cys49, Cys53, and Cys81. Mo-bis(molybdopterin guanine dinucleotide) contacts are provided by residues Lys83, Gln150, Asn175, Cys179, 212–219 (WGSNMAEM), 243–247 (STFEH), 262–264 (QSD), Met373, Gln377, Asn483, 509–510 (SD), Lys532, Asp559, and 719–728 (TGRVLEHWHS). Substrate is bound at residue Trp795. Positions 803 and 820 each coordinate Mo-bis(molybdopterin guanine dinucleotide).

It belongs to the prokaryotic molybdopterin-containing oxidoreductase family. NasA/NapA/NarB subfamily. Component of the periplasmic nitrate reductase NapAB complex composed of NapA and NapB. [4Fe-4S] cluster is required as a cofactor. The cofactor is Mo-bis(molybdopterin guanine dinucleotide). In terms of processing, predicted to be exported by the Tat system. The position of the signal peptide cleavage has not been experimentally proven.

The protein resides in the periplasm. It catalyses the reaction 2 Fe(II)-[cytochrome] + nitrate + 2 H(+) = 2 Fe(III)-[cytochrome] + nitrite + H2O. Catalytic subunit of the periplasmic nitrate reductase complex NapAB. Receives electrons from NapB and catalyzes the reduction of nitrate to nitrite. In Bordetella bronchiseptica (strain ATCC BAA-588 / NCTC 13252 / RB50) (Alcaligenes bronchisepticus), this protein is Periplasmic nitrate reductase.